The primary structure comprises 317 residues: Acetyl-coenzyme A carboxylase carboxyl transferase subunit alpha (317 aa).

A CoA carboxyltransferase C-terminal domain is found at 39–293 (RLETKAREAL…GDAIADALSQ (255 aa)).

Belongs to the AccA family. Acetyl-CoA carboxylase is a heterohexamer composed of biotin carboxyl carrier protein (AccB), biotin carboxylase (AccC) and two subunits each of ACCase subunit alpha (AccA) and ACCase subunit beta (AccD).

Its subcellular location is the cytoplasm. It carries out the reaction N(6)-carboxybiotinyl-L-lysyl-[protein] + acetyl-CoA = N(6)-biotinyl-L-lysyl-[protein] + malonyl-CoA. Its pathway is lipid metabolism; malonyl-CoA biosynthesis; malonyl-CoA from acetyl-CoA: step 1/1. In terms of biological role, component of the acetyl coenzyme A carboxylase (ACC) complex. First, biotin carboxylase catalyzes the carboxylation of biotin on its carrier protein (BCCP) and then the CO(2) group is transferred by the carboxyltransferase to acetyl-CoA to form malonyl-CoA. In Xanthobacter autotrophicus (strain ATCC BAA-1158 / Py2), this protein is Acetyl-coenzyme A carboxylase carboxyl transferase subunit alpha.